The sequence spans 475 residues: Aspartyl/glutamyl-tRNA(Asn/Gln) amidotransferase subunit B (475 aa).

The protein belongs to the GatB/GatE family. GatB subfamily. As to quaternary structure, heterotrimer of A, B and C subunits.

The catalysed reaction is L-glutamyl-tRNA(Gln) + L-glutamine + ATP + H2O = L-glutaminyl-tRNA(Gln) + L-glutamate + ADP + phosphate + H(+). The enzyme catalyses L-aspartyl-tRNA(Asn) + L-glutamine + ATP + H2O = L-asparaginyl-tRNA(Asn) + L-glutamate + ADP + phosphate + 2 H(+). In terms of biological role, allows the formation of correctly charged Asn-tRNA(Asn) or Gln-tRNA(Gln) through the transamidation of misacylated Asp-tRNA(Asn) or Glu-tRNA(Gln) in organisms which lack either or both of asparaginyl-tRNA or glutaminyl-tRNA synthetases. The reaction takes place in the presence of glutamine and ATP through an activated phospho-Asp-tRNA(Asn) or phospho-Glu-tRNA(Gln). The polypeptide is Aspartyl/glutamyl-tRNA(Asn/Gln) amidotransferase subunit B (Bacillus anthracis (strain A0248)).